We begin with the raw amino-acid sequence, 359 residues long: (2E,6E)-farnesyl diphosphate synthase (359 aa).

The segment at methionine 1–arginine 21 is disordered. Residues lysine 73, arginine 76, and histidine 105 each contribute to the isopentenyl diphosphate site. Residues aspartate 112 and aspartate 116 each contribute to the Mg(2+) site. The DDXXD motif signature appears at aspartate 112–aspartate 116. Arginine 121 is a binding site for (2E)-geranyl diphosphate. Position 122 (arginine 122) interacts with isopentenyl diphosphate. (2E)-geranyl diphosphate-binding residues include lysine 201, threonine 202, and glutamine 239. The short motif at aspartate 242–glycine 246 is the DDXXD motif element. (2E)-geranyl diphosphate-binding residues include lysine 256 and lysine 266.

It belongs to the FPP/GGPP synthase family. Mg(2+) is required as a cofactor.

Its subcellular location is the cytoplasm. The catalysed reaction is isopentenyl diphosphate + (2E)-geranyl diphosphate = (2E,6E)-farnesyl diphosphate + diphosphate. Its pathway is isoprenoid biosynthesis; farnesyl diphosphate biosynthesis; farnesyl diphosphate from geranyl diphosphate and isopentenyl diphosphate. In terms of biological role, catalyzes the condensation of isopentenyl pyrophosphate (IPP) with geranyl diphosphate (GPP) to yield (2E,6E)-farnesyl diphosphate (E,E-FPP). May be used for squalene and possibly sterol biosynthesis. This is (2E,6E)-farnesyl diphosphate synthase from Mycobacterium bovis (strain ATCC BAA-935 / AF2122/97).